Reading from the N-terminus, the 165-residue chain is Endoribonuclease YbeY (165 aa).

Residues His126, His130, and His136 each contribute to the Zn(2+) site.

It belongs to the endoribonuclease YbeY family. It depends on Zn(2+) as a cofactor.

The protein resides in the cytoplasm. In terms of biological role, single strand-specific metallo-endoribonuclease involved in late-stage 70S ribosome quality control and in maturation of the 3' terminus of the 16S rRNA. The chain is Endoribonuclease YbeY from Ruegeria pomeroyi (strain ATCC 700808 / DSM 15171 / DSS-3) (Silicibacter pomeroyi).